We begin with the raw amino-acid sequence, 465 residues long: Eukaryotic translation initiation factor 3 subunit M (465 aa).

Residues 215-383 (EEMSYNHVIL…GEFLVHRATY (169 aa)) form the PCI domain. Residues 429–465 (AAAESGREGGARGGAGERRRGGGGHQGPREVDLVGGD) form a disordered region. Basic and acidic residues-rich tracts occupy residues 433 to 448 (SGRE…ERRR) and 455 to 465 (GPREVDLVGGD).

It belongs to the eIF-3 subunit M family. As to quaternary structure, component of the eukaryotic translation initiation factor 3 (eIF-3) complex.

It is found in the cytoplasm. Its function is as follows. Component of the eukaryotic translation initiation factor 3 (eIF-3) complex, which is involved in protein synthesis of a specialized repertoire of mRNAs and, together with other initiation factors, stimulates binding of mRNA and methionyl-tRNAi to the 40S ribosome. The eIF-3 complex specifically targets and initiates translation of a subset of mRNAs involved in cell proliferation. The protein is Eukaryotic translation initiation factor 3 subunit M of Coccidioides immitis (strain RS) (Valley fever fungus).